We begin with the raw amino-acid sequence, 1019 residues long: TOG array regulator of axonemal microtubules protein 2 (1019 aa).

4 disordered regions span residues 28–54 (AGPRVLPPGSINSSLPHGEGSLQPEPR), 131–158 (RRLSEGLAASSRASLDPGGGPQGVPLHS), 249–311 (TPSR…AKKP), and 991–1019 (SLGGSRKATDRGVAPDSKTTGSSYPFQLD). A compositionally biased stretch (polar residues) spans 1007–1019 (SKTTGSSYPFQLD).

This sequence belongs to the Crescerin family.

This chain is TOG array regulator of axonemal microtubules protein 2, found in Homo sapiens (Human).